Reading from the N-terminus, the 274-residue chain is Putative HTH-type transcriptional regulator RmpR (274 aa).

Residues 18-88 (IERADAIVER…RSGGTFVVNQ (71 aa)) form the HTH gntR-type domain. Residues 46–65 (EAALSEMFGVGGATLREALS) constitute a DNA-binding region (H-T-H motif). Residues 250–265 (SRPSSPATAPDGSSSA) are compositionally biased toward polar residues. Positions 250 to 274 (SRPSSPATAPDGSSSAEAAMIQEGQ) are disordered.

In terms of biological role, may regulate the transcription of the rmpAB operon. This chain is Putative HTH-type transcriptional regulator RmpR (rmpR), found in Mycobacterium gastri.